The following is a 253-amino-acid chain: tRNA pseudouridine synthase A (253 aa).

The active-site Nucleophile is D52. A substrate-binding site is contributed by Y111.

Belongs to the tRNA pseudouridine synthase TruA family. Homodimer.

The enzyme catalyses uridine(38/39/40) in tRNA = pseudouridine(38/39/40) in tRNA. In terms of biological role, formation of pseudouridine at positions 38, 39 and 40 in the anticodon stem and loop of transfer RNAs. This chain is tRNA pseudouridine synthase A, found in Methylobacterium radiotolerans (strain ATCC 27329 / DSM 1819 / JCM 2831 / NBRC 15690 / NCIMB 10815 / 0-1).